The chain runs to 446 residues: tRNA modification GTPase MnmE (446 aa).

(6S)-5-formyl-5,6,7,8-tetrahydrofolate-binding residues include Arg-24, Glu-81, and Lys-120. A TrmE-type G domain is found at 216–368; that stretch reads GLHAVLIGPP…LHTRLRELAL (153 aa). Asn-226 is a K(+) binding site. Residues 226–231, 245–251, and 270–273 each bind GTP; these read NAGKSS, TDVAGTT, and DTAG. Ser-230 lines the Mg(2+) pocket. Residues Thr-245, Val-247, and Thr-250 each contribute to the K(+) site. Thr-251 is a binding site for Mg(2+). A (6S)-5-formyl-5,6,7,8-tetrahydrofolate-binding site is contributed by Lys-446.

This sequence belongs to the TRAFAC class TrmE-Era-EngA-EngB-Septin-like GTPase superfamily. TrmE GTPase family. As to quaternary structure, homodimer. Heterotetramer of two MnmE and two MnmG subunits. K(+) serves as cofactor.

The protein resides in the cytoplasm. Functionally, exhibits a very high intrinsic GTPase hydrolysis rate. Involved in the addition of a carboxymethylaminomethyl (cmnm) group at the wobble position (U34) of certain tRNAs, forming tRNA-cmnm(5)s(2)U34. The protein is tRNA modification GTPase MnmE of Xanthomonas campestris pv. campestris (strain 8004).